Here is a 255-residue protein sequence, read N- to C-terminus: MVLEVKNLSFKYSQKLILDKLSFSVPKNSITSILAPNGSGKTTLLKCLLGLLKPLEETEIKACNKDILPLKPYEKAKLIAYIPQVEYYAFNFSVLDFVLMGKATHLNLFAMPKAKHIKEATSVLERLDLESLKDQGINDLSGGQRQMVLLARSLLQRTPLLLLDEPTSALDLKNQALFFDAIKDEMKKRELSVLVNIHDPNLVARHSTHVVMLKDKKLFLQASTPIAMTSHNLSALYDTPLEAIWHDDKLVVYAL.

An ABC transporter domain is found at 3-240; sequence LEVKNLSFKY…HNLSALYDTP (238 aa). 35 to 42 contributes to the ATP binding site; the sequence is APNGSGKT.

Belongs to the ABC transporter superfamily.

It localises to the cell inner membrane. Functionally, part of a binding-protein-dependent transport system for an iron chelatin. Probably responsible for energy coupling to the transport system (Potential). The protein is Probable iron chelatin transport ATP-binding protein jhp_0821 of Helicobacter pylori (strain J99 / ATCC 700824) (Campylobacter pylori J99).